A 584-amino-acid polypeptide reads, in one-letter code: Putative sel1-like repeat-containing protein L18 (584 aa).

Sel1-like repeat units lie at residues 132–167 (SMAQ…DQNN), 168–203 (KYGL…CQNF), 204–237 (SKAQ…NQNH), 238–273 (SSAQ…SQGL), 274–309 (NSAK…YDDG), and 316–351 (EVAM…NTKN).

The sequence is that of Putative sel1-like repeat-containing protein L18 from Acanthamoeba polyphaga (Amoeba).